The primary structure comprises 66 residues: MNTKTLIVVFLVCLLVSEVVLARRCGGGRKIKIKKIVRKLRPIVRVMKVITRMRTRRPRPRPCNSS.

The N-terminal stretch at 1 to 22 (MNTKTLIVVFLVCLLVSEVVLA) is a signal peptide.

Contains 1 disulfide bond. In terms of tissue distribution, expressed by the venom gland.

The protein localises to the secreted. This is Venom protein 27.1 from Lychas mucronatus (Chinese swimming scorpion).